The following is a 236-amino-acid chain: 7-cyano-7-deazaguanine synthase (236 aa).

An ATP-binding site is contributed by 7–17; that stretch reads CSGGLDSVSLA. Cysteine 185, cysteine 193, cysteine 196, and cysteine 199 together coordinate Zn(2+).

The protein belongs to the QueC family. It depends on Zn(2+) as a cofactor.

It carries out the reaction 7-carboxy-7-deazaguanine + NH4(+) + ATP = 7-cyano-7-deazaguanine + ADP + phosphate + H2O + H(+). It participates in purine metabolism; 7-cyano-7-deazaguanine biosynthesis. Functionally, catalyzes the ATP-dependent conversion of 7-carboxy-7-deazaguanine (CDG) to 7-cyano-7-deazaguanine (preQ(0)). This chain is 7-cyano-7-deazaguanine synthase, found in Sinorhizobium fredii (strain NBRC 101917 / NGR234).